The chain runs to 126 residues: Protein LLP homolog (126 aa).

Over residues 1 to 21 (MAKSLRSKWRRKMRAEKRKKV) the composition is skewed to basic residues. 2 disordered regions span residues 1–22 (MAKS…KKVA) and 53–126 (VPPE…RLAW). Residues 73-94 (DGGKMDLDTKRNKKTMLDEHGR) are compositionally biased toward basic and acidic residues. A compositionally biased stretch (basic residues) spans 103–126 (QAKKLKAKRVGKNGKPKPKKRLAW).

It belongs to the learning-associated protein family.

Its subcellular location is the nucleus. It is found in the nucleolus. The protein localises to the chromosome. Regulates dendritic and spine growth and synaptic transmission. The chain is Protein LLP homolog (llph) from Danio rerio (Zebrafish).